A 545-amino-acid polypeptide reads, in one-letter code: CTP synthase (545 aa).

The interval 1–266 (MTTNYIFVTG…DDLVCARFGI (266 aa)) is amidoligase domain. Position 14 (S14) interacts with CTP. Residue S14 participates in UTP binding. ATP is bound by residues 15-20 (SLGKGI) and D72. Mg(2+)-binding residues include D72 and E140. CTP-binding positions include 147–149 (DIE), 187–192 (KTKPTQ), and K223. Residues 187–192 (KTKPTQ) and K223 each bind UTP. 239 to 241 (KDV) provides a ligand contact to ATP. The region spanning 291–542 (TIGMVGKYTE…VKAAGQFQRG (252 aa)) is the Glutamine amidotransferase type-1 domain. G352 is an L-glutamine binding site. The Nucleophile; for glutamine hydrolysis role is filled by C379. L-glutamine-binding positions include 380–383 (LGMQ), E403, and R470. Residues H515 and E517 contribute to the active site.

Belongs to the CTP synthase family. Homotetramer.

It catalyses the reaction UTP + L-glutamine + ATP + H2O = CTP + L-glutamate + ADP + phosphate + 2 H(+). It carries out the reaction L-glutamine + H2O = L-glutamate + NH4(+). The enzyme catalyses UTP + NH4(+) + ATP = CTP + ADP + phosphate + 2 H(+). Its pathway is pyrimidine metabolism; CTP biosynthesis via de novo pathway; CTP from UDP: step 2/2. Its activity is regulated as follows. Allosterically activated by GTP, when glutamine is the substrate; GTP has no effect on the reaction when ammonia is the substrate. The allosteric effector GTP functions by stabilizing the protein conformation that binds the tetrahedral intermediate(s) formed during glutamine hydrolysis. Inhibited by the product CTP, via allosteric rather than competitive inhibition. In terms of biological role, catalyzes the ATP-dependent amination of UTP to CTP with either L-glutamine or ammonia as the source of nitrogen. Regulates intracellular CTP levels through interactions with the four ribonucleotide triphosphates. The sequence is that of CTP synthase from Vibrio cholerae serotype O1 (strain ATCC 39541 / Classical Ogawa 395 / O395).